Consider the following 126-residue polypeptide: uncharacterized protein (126 aa).

A helical membrane pass occupies residues 48–68 (ILCMFPWQCVVYVFSNFVWLV).

Its subcellular location is the membrane. This is an uncharacterized protein from Homo sapiens (Human).